Here is a 265-residue protein sequence, read N- to C-terminus: 2-C-methyl-D-erythritol 4-phosphate cytidylyltransferase (265 aa).

The segment covering 231–241 (DRGGASREAER) has biased composition (basic and acidic residues). Residues 231-265 (DRGGASREAERSAMPSAATSVFSGARSAASGSEEV) form a disordered region. The span at 253-265 (SGARSAASGSEEV) shows a compositional bias: low complexity.

This sequence belongs to the IspD/TarI cytidylyltransferase family. IspD subfamily.

It catalyses the reaction 2-C-methyl-D-erythritol 4-phosphate + CTP + H(+) = 4-CDP-2-C-methyl-D-erythritol + diphosphate. The protein operates within isoprenoid biosynthesis; isopentenyl diphosphate biosynthesis via DXP pathway; isopentenyl diphosphate from 1-deoxy-D-xylulose 5-phosphate: step 2/6. Catalyzes the formation of 4-diphosphocytidyl-2-C-methyl-D-erythritol from CTP and 2-C-methyl-D-erythritol 4-phosphate (MEP). In Xanthomonas campestris pv. campestris (strain B100), this protein is 2-C-methyl-D-erythritol 4-phosphate cytidylyltransferase.